A 500-amino-acid chain; its full sequence is Toluene-4-monooxygenase system, hydroxylase component subunit alpha (500 aa).

Fe cation contacts are provided by Glu-104, Glu-134, His-137, Glu-197, Glu-231, and His-234.

It belongs to the TmoA/XamoA family. The alkene monooxygenase multicomponent enzyme system is composed of an electron transfer component and a monooxygenase component interacting with the effector protein TmoD. The electron transfer component is composed of a ferredoxin reductase (TmoF) and a ferredoxin (TmoC), and the monooxygenase component is formed by a heterohexamer (dimer of heterotrimers) of two alpha subunits (TmoA), two beta subunits (TmoE) and two gamma subunits (TmoB). Fe(2+) is required as a cofactor.

It carries out the reaction toluene + NADH + O2 + H(+) = 4-methylphenol + NAD(+) + H2O. It functions in the pathway xenobiotic degradation; toluene degradation. With respect to regulation, inhibited by Zn(2+) and Cu(2+). Component of the toluene-4-monooxygenase multicomponent enzyme system which catalyzes the O2- and NADH-dependent hydroxylation of toluene to form p-cresol. Also able to convert benzene to phenol, catechol, and 1,2,3-trihydroxybenzene by successive hydroxylations. The protein is Toluene-4-monooxygenase system, hydroxylase component subunit alpha of Ectopseudomonas mendocina (Pseudomonas mendocina).